Consider the following 162-residue polypeptide: MLRAVGSLLRLGRGLTVRCGPGAPLEATRRPAPALPPRGLPCYSSGGAPSNSGPQGHGEIHRVPTQRRPSQFDKKILLWTGRFKSMEEIPPRIPPEMIDTARNKARVKACYIMIGLTIIACFAVIVSAKRAVERHESLTSWNLAKKAKWREEAALAAQAKAK.

A disordered region spans residues 26 to 69 (EATRRPAPALPPRGLPCYSSGGAPSNSGPQGHGEIHRVPTQRRP). Residues 107 to 127 (VKACYIMIGLTIIACFAVIVS) form a helical membrane-spanning segment.

It belongs to the UPF0389 family.

The protein resides in the membrane. The protein is Protein FAM162B (FAM162B) of Homo sapiens (Human).